Consider the following 883-residue polypeptide: Phosphoenolpyruvate carboxylase (883 aa).

Catalysis depends on residues H138 and K546.

Belongs to the PEPCase type 1 family. Requires Mg(2+) as cofactor.

It catalyses the reaction oxaloacetate + phosphate = phosphoenolpyruvate + hydrogencarbonate. Its function is as follows. Forms oxaloacetate, a four-carbon dicarboxylic acid source for the tricarboxylic acid cycle. This chain is Phosphoenolpyruvate carboxylase, found in Enterobacter sp. (strain 638).